Here is a 404-residue protein sequence, read N- to C-terminus: Nuclear receptor subfamily 2 group F member 6 (404 aa).

Residues 1–15 (MAMVTGGWGGPGGDT) show a composition bias toward gly residues. Residues 1 to 49 (MAMVTGGWGGPGGDTNGVDKAGGYPRAAEDDSASPPGAASDAEPGDEER) are disordered. Over residues 33 to 42 (ASPPGAASDA) the composition is skewed to low complexity. A phosphoserine mark is found at S34 and S40. The segment at residues 53 to 128 (QVDCVVCGDK…VGMRKEAVQR (76 aa)) is a DNA-binding region (nuclear receptor). The NR C4-type zinc finger occupies 56-76 (CVVCGDKSSGKHYGVFTCEGC). S83 is modified (phosphoserine). The segment at 92–116 (CRSNRDCQIDQHHRNQCQYCRLKKC) adopts an NR C4-type zinc-finger fold. The NR LBD domain occupies 165–393 (PVSELIAQLL…TLIRDMLLSG (229 aa)). The important for dimerization stretch occupies residues 327 to 404 (LQEKAQVALT…TFNWPYGSGQ (78 aa)).

This sequence belongs to the nuclear hormone receptor family. NR2 subfamily. Binds DNA as dimer; homodimer and heterodimer with NR2F2 and probably NR2F1. Interacts with THRB. In terms of tissue distribution, expressed in heart, placenta, liver, skeletal muscle, kidney and pancreas.

The protein resides in the nucleus. Its function is as follows. Transcription factor predominantly involved in transcriptional repression. Binds to promoter/enhancer response elements that contain the imperfect 5'-AGGTCA-3' direct or inverted repeats with various spacings which are also recognized by other nuclear hormone receptors. Involved in modulation of hormonal responses. Represses transcriptional activity of the lutropin-choriogonadotropic hormone receptor/LHCGR gene, the renin/REN gene and the oxytocin-neurophysin/OXT gene. Represses the triiodothyronine-dependent and -independent transcriptional activity of the thyroid hormone receptor gene in a cell type-specific manner. The corepressing function towards thyroid hormone receptor beta/THRB involves at least in part the inhibition of THRB binding to triiodothyronine response elements (TREs) by NR2F6. Inhibits NFATC transcription factor DNA binding and subsequently its transcriptional activity. Acts as transcriptional repressor of IL-17 expression in Th-17 differentiated CD4(+) T cells and may be involved in induction and/or maintenance of peripheral immunological tolerance and autoimmunity. Involved in development of forebrain circadian clock; is required early in the development of the locus coeruleus (LC). This Homo sapiens (Human) protein is Nuclear receptor subfamily 2 group F member 6 (NR2F6).